The chain runs to 214 residues: Adenylate kinase (214 aa).

ATP is bound at residue 10–15 (GAGKGT). The interval 30–59 (STGDMLRAAVKAGSELGLKAKEIMDAGKLV) is NMP. AMP contacts are provided by residues Thr31, Arg36, 57-59 (KLV), 85-88 (GFPR), and Gln92. The segment at 122 to 159 (GRRVHAASGRVYHVKFNPPKVEDKDDVTGEELTIRKDD) is LID. ATP is bound by residues Arg123 and 132-133 (VY). AMP is bound by residues Arg156 and Arg167. Arg200 contributes to the ATP binding site.

This sequence belongs to the adenylate kinase family. Monomer.

Its subcellular location is the cytoplasm. It carries out the reaction AMP + ATP = 2 ADP. The protein operates within purine metabolism; AMP biosynthesis via salvage pathway; AMP from ADP: step 1/1. Catalyzes the reversible transfer of the terminal phosphate group between ATP and AMP. Plays an important role in cellular energy homeostasis and in adenine nucleotide metabolism. In Yersinia pseudotuberculosis serotype O:1b (strain IP 31758), this protein is Adenylate kinase.